We begin with the raw amino-acid sequence, 86 residues long: Putative pro-MCH-like protein 2 (86 aa).

The interval 31-49 (GSVAFPAENGVQDTESTLE) is NGE-like. The disordered stretch occupies residues 40 to 60 (GVQDTESTLEKRETGDEENSA). An NEI-like region spans residues 52 to 64 (ETGDEENSAKFPI). Residues 68 to 86 (DFDTLRCMLGRVYQRCWQV) are melanin-concentrating hormone-like.

Belongs to the melanin-concentrating hormone family. As to expression, expressed in testis but not in brain.

This Homo sapiens (Human) protein is Putative pro-MCH-like protein 2 (PMCHL2).